Consider the following 1016-residue polypeptide: DNA polymerase I (1016 aa).

One can recognise a 5'-3' exonuclease domain in the interval 1-308 (MPNSIWTSSD…MEFTTLTRRV (308 aa)). Residues 334–361 (GPDLDAAEPEPVAGGIPEVSGESVPMPP) form a disordered region. Residues 394-630 (SAYVTIRDLV…MEARGITVDR (237 aa)) enclose the 3'-5' exonuclease domain. The segment at 768-1016 (GRKIRTAFIS…RAATNWDEAH (249 aa)) is polymerase.

Belongs to the DNA polymerase type-A family. As to quaternary structure, single-chain monomer with multiple functions.

It carries out the reaction DNA(n) + a 2'-deoxyribonucleoside 5'-triphosphate = DNA(n+1) + diphosphate. In terms of biological role, in addition to polymerase activity, this DNA polymerase exhibits 3'-5' and 5'-3' exonuclease activity. This Rhizobium leguminosarum protein is DNA polymerase I (polA).